The following is a 315-amino-acid chain: Ester hydrolase C11orf54 homolog (315 aa).

H266, H268, and H278 together coordinate Zn(2+).

As to quaternary structure, monomer. Requires Zn(2+) as cofactor.

The protein localises to the nucleus. It is found in the cytoplasm. Exhibits ester hydrolase activity on the substrate p-nitrophenyl acetate, in vitro. Regulates DNA damage and repair by regulating HIF1A degradation via chaperone-mediated autophagy (CMA). This chain is Ester hydrolase C11orf54 homolog, found in Rattus norvegicus (Rat).